We begin with the raw amino-acid sequence, 186 residues long: Large ribosomal subunit protein uL6 (186 aa).

It belongs to the universal ribosomal protein uL6 family. Part of the 50S ribosomal subunit.

In terms of biological role, this protein binds to the 23S rRNA, and is important in its secondary structure. It is located near the subunit interface in the base of the L7/L12 stalk, and near the tRNA binding site of the peptidyltransferase center. The polypeptide is Large ribosomal subunit protein uL6 (Hyperthermus butylicus (strain DSM 5456 / JCM 9403 / PLM1-5)).